Here is a 985-residue protein sequence, read N- to C-terminus: Serine/threonine-protein kinase N2 (985 aa).

The REM-1 1 domain maps to 33–109 (KLDFSDTIVQ…LQELNAHIVV (77 aa)). N6-acetyllysine is present on Lys77. Ser110 bears the Phosphoserine mark. Residues 111-136 (DPEDYTDCPRTPDTPNSDSRSSTSNN) are disordered. Phosphothreonine is present on residues Thr121 and Thr124. The segment covering 121–136 (TPDTPNSDSRSSTSNN) has biased composition (low complexity). REM-1 domains follow at residues 121–204 (TPDT…TNEL) and 207–286 (DNAK…ELPK). Phosphoserine occurs at positions 303, 307, 361, and 363. The tract at residues 352-383 (ATSVALPGWSPSENRSSFMSRTSKSKSGSSRN) is disordered. Positions 354-474 (SVALPGWSPS…LYLEPQGTLF (121 aa)) constitute a C2 domain. Low complexity predominate over residues 366-382 (RSSFMSRTSKSKSGSSR). Positions 383–464 (NLLKTDDLSN…FLDNQRHGMA (82 aa)) are necessary to rescue apical junction formation. A phosphoserine mark is found at Ser536, Ser584, Ser621, and Ser632. The segment at 570–590 (DLEPEAPPAPPRASSLGEIDD) is disordered. The 260-residue stretch at 658–917 (FRCCAVLGRG…AEDVKKHPFF (260 aa)) folds into the Protein kinase domain. Residues 664-672 (LGRGHFGKV) and Lys687 each bind ATP. Catalysis depends on Asp783, which acts as the Proton acceptor. Thr817 bears the Phosphothreonine; by PDPK1 mark. The tract at residues 918-978 (RLTDWSALLD…EEEQEMFRDF (61 aa)) is necessary for the catalytic activity. The AGC-kinase C-terminal domain occupies 918-985 (RLTDWSALLD…RDFDYVADWC (68 aa)). Ser953 is subject to Phosphoserine. Thr959 carries the post-translational modification Phosphothreonine. Positions 979-985 (DYVADWC) are negatively regulates the responsiveness of the catalytic activity by cardiolipin and is required for optimal activation by the GTP-bound RhoA.

The protein belongs to the protein kinase superfamily. AGC Ser/Thr protein kinase family. PKC subfamily. As to quaternary structure, interacts (via the REM repeats) with RHOA (GTP-bound form preferentially) and interacts (via the REM repeats) with RAC1 (GTP-bound form preferentially); the interactions induce its autophosphorylation. Interacts with RHOC. Interacts with NCK1 (via SH3 domains) and NCK2. Interacts with CD44. Interacts (via C-terminal kinase domain) with PDPK1; the interaction stimulates PDPK1 kinase activity. Interacts with MAP3K2; the interaction activates PRK2 kinase activity in a MAP3K2-independent kinase activity. Interacts (via C-terminal domain) with AKT1; the interaction occurs with the C-terminal cleavage product of PRK2 in apoptotic cells. Interacts (via C-terminus) with PTPN13 (via PDZ 3 domain). Interacts with CDK10. Post-translationally, phosphorylated during mitosis. Autophosphorylated. Phosphorylated. Binding to Rho and Rac promotes autophosphorylation and phosphorylation on serine and threonine residues. Phosphorylated by CDK10. Proteolytically cleaved by caspase-3 during the induction of apoptotic cell death. Activated by limited proteolysis with trypsin. In terms of tissue distribution, expressed in liver (at protein level).

It localises to the cytoplasm. It is found in the nucleus. The protein resides in the membrane. Its subcellular location is the cell projection. The protein localises to the lamellipodium. It localises to the cytoskeleton. It is found in the cleavage furrow. The protein resides in the midbody. Its subcellular location is the cell junction. It catalyses the reaction L-seryl-[protein] + ATP = O-phospho-L-seryl-[protein] + ADP + H(+). The enzyme catalyses L-threonyl-[protein] + ATP = O-phospho-L-threonyl-[protein] + ADP + H(+). With respect to regulation, kinase activity is activated upon binding to GTP-bound Rho1/Rac1 GTPases. Activated by caspase-3 (CASP3) cleavage during apoptosis. Activated by lipids, particularly cardiolipin and to a lesser extent by other acidic phospholipids and unsaturated fatty acids. Two specific sites, Thr-817 (activation loop of the kinase domain) and Thr-959 (turn motif), need to be phosphorylated for its full activation. PKC-related serine/threonine-protein kinase and Rho/Rac effector protein that participates in specific signal transduction responses in the cell. Plays a role in the regulation of cell cycle progression, actin cytoskeleton assembly, cell migration, cell adhesion, tumor cell invasion and transcription activation signaling processes. Phosphorylates CTTN in hyaluronan-induced astrocytes and hence decreases CTTN ability to associate with filamentous actin. Phosphorylates HDAC5, therefore lead to impair HDAC5 import. Direct RhoA target required for the regulation of the maturation of primordial junctions into apical junction formation in bronchial epithelial cells. Required for G2/M phases of the cell cycle progression and abscission during cytokinesis in a ECT2-dependent manner. Stimulates FYN kinase activity that is required for establishment of skin cell-cell adhesion during keratinocytes differentiation. Regulates epithelial bladder cells speed and direction of movement during cell migration and tumor cell invasion. Inhibits Akt pro-survival-induced kinase activity. Mediates Rho protein-induced transcriptional activation via the c-fos serum response factor (SRF). Involved in the negative regulation of ciliogenesis. The polypeptide is Serine/threonine-protein kinase N2 (Pkn2) (Rattus norvegicus (Rat)).